Consider the following 82-residue polypeptide: uncharacterized protein (82 aa).

To M.thermoautotrophicum MTH386.

This is an uncharacterized protein from Methanocaldococcus jannaschii (strain ATCC 43067 / DSM 2661 / JAL-1 / JCM 10045 / NBRC 100440) (Methanococcus jannaschii).